A 398-amino-acid chain; its full sequence is ATP-dependent RNA helicase eIF4A (398 aa).

A Q motif motif is present at residues 25-53 (DSFDSMELKPELLRGVYAYGFERPSAIQQ). One can recognise a Helicase ATP-binding domain in the interval 56 to 226 (ILPIVKGNDV…TKFMRDPVRI (171 aa)). 69 to 76 (AQSGTGKT) contacts ATP. The DEAD box motif lies at 174–177 (DEAD). The Helicase C-terminal domain maps to 237–398 (GIKQFYIAVE…EMPMNVADLI (162 aa)).

Belongs to the DEAD box helicase family. eIF4A subfamily. Component of the eIF4F complex, which composition varies with external and internal environmental conditions. It is composed of at least eIF4A, eIF4E and eIF4G.

It localises to the cytoplasm. The enzyme catalyses ATP + H2O = ADP + phosphate + H(+). Functionally, ATP-dependent RNA helicase which is a subunit of the eIF4F complex involved in cap recognition and is required for mRNA binding to ribosome. In the current model of translation initiation, eIF4A unwinds RNA secondary structures in the 5'-UTR of mRNAs which is necessary to allow efficient binding of the small ribosomal subunit, and subsequent scanning for the initiator codon. The protein is ATP-dependent RNA helicase eIF4A (tif1) of Emericella nidulans (strain FGSC A4 / ATCC 38163 / CBS 112.46 / NRRL 194 / M139) (Aspergillus nidulans).